A 268-amino-acid polypeptide reads, in one-letter code: Mesoderm posterior protein 1 (268 aa).

The interval 17 to 93 is disordered; sequence AAWGPTRRPP…RQSASEREKL (77 aa). Residues 36–48 are compositionally biased toward polar residues; sequence LVSSPDSWGSTPA. Low complexity predominate over residues 66–86; that stretch reads APSVGRRGARSSRLGSGQRQS. The bHLH domain maps to 82–136; it reads GQRQSASEREKLRMRTLARALHELRRFLPPSVAPAGQSLTKIETLRLAIRYIGHL. The short motif at 163–167 is the CPLCP element; sequence CPLCP. Tandem repeats lie at residues 182 to 183 and 184 to 185. The tract at residues 182–185 is 2 X 2 AA tandem repeats of G-Q; it reads GQGQ.

It localises to the nucleus. Functionally, transcription factor. Plays a role in the epithelialization of somitic mesoderm and in the development of cardiac mesoderm. Defines the rostrocaudal patterning of the somites by participating in distinct Notch pathways. In Homo sapiens (Human), this protein is Mesoderm posterior protein 1 (MESP1).